The primary structure comprises 203 residues: uncharacterized protein (203 aa).

The helical transmembrane segment at 171–191 (VGYLSIWLKEYWYLVVLFVLI) threads the bilayer.

It is found in the membrane. This is an uncharacterized protein from Methanocaldococcus jannaschii (strain ATCC 43067 / DSM 2661 / JAL-1 / JCM 10045 / NBRC 100440) (Methanococcus jannaschii).